The primary structure comprises 839 residues: Sodium/hydrogen exchanger 3 (839 aa).

A signal peptide spans 1 to 32; the sequence is MPLGVRGTRREFRFPVWGLLLLALWMLPRALG. The Extracellular portion of the chain corresponds to 33-56; sequence VEEIPGPDSHEKQGFQIVTFKWHH. The helical transmembrane segment at 57 to 79 threads the bilayer; that stretch reads VQDPYIIALWILVASLAKIVFHL. Residues 80–87 are Cytoplasmic-facing; it reads SHKVTSVV. Residues 88-107 traverse the membrane as a helical segment; that stretch reads PESALLIVLGLILGGIVWAA. At 108 to 116 the chain is on the extracellular side; it reads DHIASFTLT. The helical transmembrane segment at 117 to 134 threads the bilayer; that stretch reads PTVFFFYLLPPIVLDAGY. Over 135–137 the chain is Cytoplasmic; sequence FMP. Residues 138–173 form a helical membrane-spanning segment; sequence NRLFFGNLGTILLYAVIGTVWNAATTGLSLYGVYLS. A 1,2-diacyl-sn-glycero-3-phospho-(1D-myo-inositol) contacts are provided by Gly-143, Gly-146, and Thr-147. At 174–186 the chain is on the extracellular side; that stretch reads GIMGDLSIGLLDF. The chain crosses the membrane as a helical span at residues 187–208; that stretch reads LLFGSLIAAVDPVAVLAVFEEV. The Cytoplasmic portion of the chain corresponds to 209 to 210; it reads HV. Residues 211–242 traverse the membrane as a helical segment; it reads NDVLFIIVFGESLLNDAVTVVLYNVFDSFVSL. Over 243 to 249 the chain is Extracellular; it reads GADKVTG. A helical membrane pass occupies residues 250 to 284; it reads VDCVKGIVSFFVVSLGGTLIGIIFAFLLSLVTRFT. Residues 285 to 286 lie on the Cytoplasmic side of the membrane; that stretch reads KH. Residues 287 to 309 traverse the membrane as a helical segment; sequence VRIIEPGFVFIISYLSYLTSEML. Residues 310–311 lie on the Extracellular side of the membrane; it reads SL. The helical transmembrane segment at 312–328 threads the bilayer; sequence SAILAITFCGICCQKYV. Topologically, residues 329 to 335 are cytoplasmic; that stretch reads KANISEQ. Residues 336–364 traverse the membrane as a helical segment; it reads SATTVRYTMKMLASGAETIIFMFLGISAV. Residues 365 to 372 lie on the Extracellular side of the membrane; the sequence is DPAIWTWN. Residues 373–394 form a helical membrane-spanning segment; the sequence is TAFILLTLVFISVYRAIGVVLQ. Residues 395-407 are Cytoplasmic-facing; that stretch reads TWLLNKYRMVQLE. Position 403 (Met-403) interacts with a 1,2-diacyl-sn-glycero-3-phospho-(1D-myo-inositol). A helical membrane pass occupies residues 408–431; sequence IIDQVVMSYGGLRGAVAYALVVLL. Over 432-438 the chain is Extracellular; it reads DEKKVKE. Residues 439–472 form a helical membrane-spanning segment; it reads KNLFVSTTIIVVFFTVIFQGLTIKPLVQWLKVKK. Topologically, residues 473–839 are cytoplasmic; sequence SEHREPKLNE…RSFLPESTHM (367 aa). Positions 502, 503, and 505 each coordinate a 1,2-diacyl-sn-glycero-3-phospho-(1D-myo-inositol). Phosphoserine occurs at positions 560 and 568. The interaction with EZR stretch occupies residues 581–595; that stretch reads RPSTVEASVSYLLRE. The interaction with NHERF4 stretch occupies residues 596 to 673; it reads NVSTVCLDMQ…RKRLESFKST (78 aa). Positions 597–701 are interaction with AHCYL1; it reads VSTVCLDMQA…GQKRRNSSIP (105 aa). Phosphoserine occurs at positions 598 and 613. At Ser-669 the chain carries Phosphoserine; by SGK1. The span at 688–697 shows a compositional bias: basic residues; that stretch reads KRERGQKRRN. Positions 688–710 are disordered; sequence KRERGQKRRNSSIPNGKIPMESP. Residues Ser-724, Ser-815, and Ser-818 each carry the phosphoserine modification.

Belongs to the monovalent cation:proton antiporter 1 (CPA1) transporter (TC 2.A.36) family. As to quaternary structure, homodimer. Found in the forms of complex and dynamic macromolecular complexes. Binds NHERF1 and NHERF2. Interacts with CHP1, CHP2 and SHANK2. Interacts with NHERF4 and interactions decrease in response to elevated calcium ion levels. Interacts with PDZK1 (via C-terminal PDZ domain). Interacts with AHCYL1; the interaction is required for SLC9A3 activity. Interacts with EZR; interaction targets SLC9A3 to the apical membrane. Interacts with SNX27 (via PDZ domains); directs SLC9A3 membrane insertion from early endosomes to the plasma membrane. Post-translationally, phosphorylated by PKA, which inhibits activity. Phosphorylation at Ser-669 by SGK1 is associated with increased abundance at the cell membrane.

Its subcellular location is the apical cell membrane. It is found in the cell membrane. It localises to the recycling endosome membrane. The protein localises to the early endosome membrane. The catalysed reaction is Na(+)(in) + H(+)(out) = Na(+)(out) + H(+)(in). Seems to switch between active and inactive modes in response to various stimuli. Activated directly or indirectly by membrane phosphatidylinositol (PIs). Regulated by a variety of auxiliary proteins, which facilitate the maturation, cell surface expression and function of the transporter. Inhibited specifically by the drug tenapanor. In terms of biological role, plasma membrane Na(+)/H(+) antiporter. Exchanges intracellular H(+) ions for extracellular Na(+) in 1:1 stoichiometry, playing a key role in salt and fluid absorption and pH homeostasis. Major apical Na(+)/H(+) exchanger in kidney and intestine playing an important role in renal and intestine Na(+) absorption and blood pressure regulation. This is Sodium/hydrogen exchanger 3 (SLC9A3) from Didelphis virginiana (North American opossum).